Consider the following 325-residue polypeptide: GMP reductase (325 aa).

Catalysis depends on Cys-173, which acts as the Thioimidate intermediate. 202–225 (IIADGGIHEHGDIAKSIRFGATMV) is a binding site for NADP(+).

It belongs to the IMPDH/GMPR family. GuaC type 2 subfamily.

The enzyme catalyses IMP + NH4(+) + NADP(+) = GMP + NADPH + 2 H(+). In terms of biological role, catalyzes the irreversible NADPH-dependent deamination of GMP to IMP. It functions in the conversion of nucleobase, nucleoside and nucleotide derivatives of G to A nucleotides, and in maintaining the intracellular balance of A and G nucleotides. This is GMP reductase from Albidiferax ferrireducens (strain ATCC BAA-621 / DSM 15236 / T118) (Rhodoferax ferrireducens).